Consider the following 138-residue polypeptide: Translation initiation factor 5A (138 aa).

At Lys-37 the chain carries Hypusine.

It belongs to the eIF-5A family.

The protein resides in the cytoplasm. Functions by promoting the formation of the first peptide bond. The polypeptide is Translation initiation factor 5A (eIF5A) (Thermococcus sibiricus (strain DSM 12597 / MM 739)).